The primary structure comprises 308 residues: S-crystallin SL18 (308 aa).

A GST N-terminal domain is found at 2 to 80 (PKYTLYYFNS…YLARQFGFYG (79 aa)). The segment at 165–205 (EMRSQDSMVEPPSQKLSPELESQSSLCSERPQCGPPDPMMG) is disordered. A compositionally biased stretch (polar residues) spans 178–191 (QKLSPELESQSSLC). The GST C-terminal domain occupies 185-308 (ESQSSLCSER…YFTLRNYTDF (124 aa)).

Belongs to the GST superfamily. As to expression, lens.

S-crystallins are structural components of squids and octopi eye lens. Contains relatively little if any GST activity. The chain is S-crystallin SL18 from Nototodarus sloanii (Wellington flying squid).